The chain runs to 491 residues: Diacylglycerol O-acyltransferase 1 (491 aa).

The interval 1-60 (MGDRGGAGGTRRRRTGSRPSSHGGGGPAAAEEEVRDAAAGPDMGAAGDAPAPAPSKDADD) is disordered. Residues 1 to 86 (MGDRGGAGGT…SLFSSDSGFN (86 aa)) lie on the Cytoplasmic side of the membrane. An involved in homomerization region spans residues 1–94 (MGDRGGAGGT…FNNYRGILNW (94 aa)). Phosphoserine occurs at positions 20 and 21. Residues 37–50 (AAAGPDMGAAGDAP) are compositionally biased toward low complexity. A helical transmembrane segment spans residues 87 to 121 (NYRGILNWCVVMLILSNARLFLENLIKYGILVDPI). Topologically, residues 122 to 133 (QVVSLFLKDPYS) are lumenal. Residues 122 to 133 (QVVSLFLKDPYS) are extracellular loop 1 (EL1). A helical membrane pass occupies residues 134–159 (WPAPCLVIAANVFAVAAFQVEKRLAV). The MBOAT fold stretch occupies residues 134 to 491 (WPAPCLVIAA…LNYEAPVAGA (358 aa)). Topologically, residues 160 to 164 (GALTE) are cytoplasmic. The helical transmembrane segment at 165–187 (QAGLLLHVANLATILCFPAAVVL) threads the bilayer. Topologically, residues 188-194 (LVESITP) are lumenal. Residues 195 to 226 (VGSLLALMVHTILFLKLFSYRDVNLWCRRARA) traverse the membrane as a helical segment. The Cytoplasmic segment spans residues 227–276 (KAASAGKRASSAAAPHTVSYPDNLTYRDLYYFLFAPTLCYELNFPRSPRI). An intracellular loop 1 (IL1) region spans residues 227–279 (KAASAGKRASSAAAPHTVSYPDNLTYRDLYYFLFAPTLCYELNFPRSPRIRKR). The helical transmembrane segment at 277 to 311 (RKRFLLRRILEMLFFTQLQVGLIQQWMVPTIQNSM) threads the bilayer. The Lumenal segment spans residues 312–318 (KPFKDMD). A helical membrane pass occupies residues 319-356 (YSRIIERLLKLAVPNHLIWLIFFYWLFHSCLNAVAELM). Topologically, residues 357–402 (QFGDREFYRDWWNSESVTYFWQNWNIPVHKWCIRHFYKPMLRRGSS) are cytoplasmic. Positions 357–402 (QFGDREFYRDWWNSESVTYFWQNWNIPVHKWCIRHFYKPMLRRGSS) are intracellular loop 2 (IL2). The short motif at 363–369 (FYRDWWN) is the FYXDWWN motif element. Residues 377-385 (WQNWNIPVH), Tyr393, and Arg407 each bind an acyl-CoA. The segment at 383-397 (PVHKWCIRHFYKPML) is amphipathic helix (AH). A helical transmembrane segment spans residues 403–423 (RWMARIGVFLASAFFHEYLVS). His418 is an active-site residue. Residues 424–431 (VPLRMFRL) are Lumenal-facing. The chain crosses the membrane as a helical span at residues 432–450 (WAFTGMMAQIPLAWFVGRF). Residues 451–452 (FQ) lie on the Cytoplasmic side of the membrane. The chain crosses the membrane as a helical span at residues 453–484 (GNYGNAAVWLTLIIGQPIAVLMYVHDYYVLNY). Residue Tyr480 coordinates an acyl-CoA. Residues 485-491 (EAPVAGA) are Lumenal-facing.

Belongs to the membrane-bound acyltransferase family. Sterol o-acyltransferase subfamily. Homodimer or homotetramer; both forms have similar enzymatic activities.

It localises to the endoplasmic reticulum membrane. It catalyses the reaction an acyl-CoA + a 1,2-diacyl-sn-glycerol = a triacyl-sn-glycerol + CoA. The enzyme catalyses all-trans-retinol + an acyl-CoA = an all-trans-retinyl ester + CoA. It carries out the reaction 2-(9Z-octadecenoyl)-glycerol + (9Z)-octadecenoyl-CoA = 1,2-di-(9Z-octadecenoyl)-sn-glycerol + CoA. The catalysed reaction is 1,2-di-(9Z-octadecenoyl)-sn-glycerol + (9Z)-octadecenoyl-CoA = 1,2,3-tri-(9Z-octadecenoyl)-glycerol + CoA. It catalyses the reaction all-trans-retinol + hexadecanoyl-CoA = all-trans-retinyl hexadecanoate + CoA. The enzyme catalyses 1-O-(9Z-octadecenyl)-glycerol + (9Z)-octadecenoyl-CoA = 1-O-(9Z-octadecyl)-3-(9Z-octadecenoyl)-glycerol + CoA. It carries out the reaction 1-O-(9Z-octadecyl)-3-(9Z-octadecenoyl)-glycerol + (9Z)-octadecenoyl-CoA = 1-O-(9Z-octadecenyl)-2,3-di-(9Z-octadecenoyl)glycerol + CoA. The catalysed reaction is 1-(9Z-octadecenoyl)-glycerol + (9Z)-octadecenoyl-CoA = 1,2-di-(9Z-octadecenoyl)-glycerol + CoA. It catalyses the reaction 1,2-di-(9Z-octadecenoyl)-glycerol + (9Z)-octadecenoate + H(+) = 1,2,3-tri-(9Z-octadecenoyl)-glycerol + H2O. The enzyme catalyses 1-octadecanoyl-2-(5Z,8Z,11Z,14Z-eicosatetraenoyl)-sn-glycerol + (9Z)-octadecenoyl-CoA = 1-octadecanoyl-2-(5Z,8Z,11Z,14Z)-eicosatetraenoyl-3-(9Z)-octadecenoyl-sn-glycerol + CoA. It carries out the reaction hexadecane-1,2-diol + 2 hexadecanoyl-CoA = 1,2-O,O-dihexadecanoyl-1,2-hexadecanediol + 2 CoA. The catalysed reaction is hexadecane-1,2-diol + hexadecanoyl-CoA = 2-hydroxyhexadecyl hexadecanoate + CoA. It catalyses the reaction 2-(9Z-octadecenoyl)-glycerol + hexadecanoyl-CoA = 1-hexadecanoyl-2-(9Z-octadecenoyl)-sn-glycerol + CoA. The enzyme catalyses 1,2-di-(9Z-octadecenoyl)-sn-glycerol + hexadecanoyl-CoA = 1,2-di-(9Z)-octadecenoyl-3-hexadecanoyl-sn-glycerol + CoA. It carries out the reaction hexadecan-1-ol + hexadecanoyl-CoA = hexadecanyl hexadecanoate + CoA. The catalysed reaction is 13-cis-retinol + hexadecanoyl-CoA = 13-cis-retinyl hexadecanoate + CoA. It catalyses the reaction 1,3-di-(9Z-octadecenoyl)-glycerol + (9Z)-octadecenoyl-CoA = 1,2,3-tri-(9Z-octadecenoyl)-glycerol + CoA. The enzyme catalyses 2,3-di-(9Z)-octadecenoyl-sn-glycerol + (9Z)-octadecenoyl-CoA = 1,2,3-tri-(9Z-octadecenoyl)-glycerol + CoA. It participates in lipid metabolism; glycerolipid metabolism. Catalyzes the terminal and only committed step in triacylglycerol synthesis by using diacylglycerol and fatty acyl CoA as substrates. Highly expressed in epithelial cells of the small intestine and its activity is essential for the absorption of dietary fats. In liver, plays a role in esterifying exogenous fatty acids to glycerol, and is required to synthesize fat for storage. Also present in female mammary glands, where it produces fat in the milk. May be involved in VLDL (very low density lipoprotein) assembly. In contrast to DGAT2 it is not essential for survival. Functions as the major acyl-CoA retinol acyltransferase (ARAT) in the skin, where it acts to maintain retinoid homeostasis and prevent retinoid toxicity leading to skin and hair disorders. Exhibits additional acyltransferase activities, includin acyl CoA:monoacylglycerol acyltransferase (MGAT), wax monoester and wax diester synthases. Also able to use 1-monoalkylglycerol (1-MAkG) as an acyl acceptor for the synthesis of monoalkyl-monoacylglycerol (MAMAG). In Chlorocebus aethiops (Green monkey), this protein is Diacylglycerol O-acyltransferase 1 (DGAT1).